Here is a 135-residue protein sequence, read N- to C-terminus: Small ribosomal subunit protein uS11 (135 aa).

This sequence belongs to the universal ribosomal protein uS11 family. In terms of assembly, part of the 30S ribosomal subunit. Interacts with proteins S7 and S18. Binds to IF-3.

Its function is as follows. Located on the platform of the 30S subunit, it bridges several disparate RNA helices of the 16S rRNA. Forms part of the Shine-Dalgarno cleft in the 70S ribosome. In Cutibacterium acnes (strain DSM 16379 / KPA171202) (Propionibacterium acnes), this protein is Small ribosomal subunit protein uS11.